The chain runs to 146 residues: Large ribosomal subunit protein uL15 (146 aa).

The segment at 1-56 (MGLRLNELSPGVGAKKTAQRRGRGIGSGLGKTGGRGVKGQKSRSGSSVRSGFEGGQ) is disordered. Over residues 24 to 37 (GIGSGLGKTGGRGV) the composition is skewed to gly residues.

This sequence belongs to the universal ribosomal protein uL15 family. In terms of assembly, part of the 50S ribosomal subunit.

Its function is as follows. Binds to the 23S rRNA. This Psychrobacter arcticus (strain DSM 17307 / VKM B-2377 / 273-4) protein is Large ribosomal subunit protein uL15.